The primary structure comprises 74 residues: U4-theraphotoxin-Cg1a (74 aa).

An N-terminal signal peptide occupies residues 1–19 (MNATIFAFLLLLNLAMHNA). Residues 20–39 (TEQSSETDMDDTLLIPEINR) constitute a propeptide that is removed on maturation. 3 disulfide bridges follow: Cys-42-Cys-56, Cys-49-Cys-61, and Cys-55-Cys-71.

The protein belongs to the neurotoxin 36 family. 01 subfamily. Expressed by the venom gland.

The protein localises to the secreted. Functionally, probable ion channel inhibitor. The sequence is that of U4-theraphotoxin-Cg1a from Chilobrachys guangxiensis (Chinese earth tiger tarantula).